The following is a 534-amino-acid chain: Inorganic phosphate transporter 1-4 (534 aa).

Residues 1-24 (MAREQLQVLNALDVAKTQWYHFTA) lie on the Cytoplasmic side of the membrane. Residues 25-45 (IIIAGMGFFTDAYDLFCISLV) traverse the membrane as a helical segment. At 46–70 (TKLLGRIYYHVEGAQKPGTLPPNVA) the chain is on the extracellular side. The helical transmembrane segment at 71 to 91 (AAVNGVAFCGTLAGQLFFGWL) threads the bilayer. At 92–99 (GDKLGRKK) the chain is on the cytoplasmic side. Residues 100 to 120 (VYGMTLMVMVLCSIASGLSFG) traverse the membrane as a helical segment. Residues 121–131 (HEPKAVMATLC) lie on the Extracellular side of the membrane. Residues 132–152 (FFRFWLGFGIGGDYPLSATIM) traverse the membrane as a helical segment. At 153 to 161 (SEYANKKTR) the chain is on the cytoplasmic side. The helical transmembrane segment at 162 to 182 (GAFVSAVFAMQGFGIMAGGIF) threads the bilayer. Topologically, residues 183-211 (AIIISSAFEAKFPSPAYADDALGSTIPQA) are extracellular. The chain crosses the membrane as a helical span at residues 212-232 (DLVWRIILMAGAIPAAMTYYS). Residues 233–293 (RSKMPETARY…GLFSKEFMSR (61 aa)) lie on the Cytoplasmic side of the membrane. Residues 294–314 (HGLHLLGTTSTWFLLDIAFYS) form a helical membrane-spanning segment. The Extracellular portion of the chain corresponds to 315–349 (QNLFQKDIFSAIGWIPPAQSMNAIQEVFKIARAQT). Residues 350–370 (LIALCSTVPGYWFTVAFIDVI) form a helical membrane-spanning segment. Residues 371-372 (GR) are Cytoplasmic-facing. A helical membrane pass occupies residues 373–393 (FAIQMMGFFFMTVFMFALAIP). The Extracellular portion of the chain corresponds to 394–403 (YNHWTHKENR). Residues 404 to 424 (IGFVIMYSLTFFFANFGPNAT) form a helical membrane-spanning segment. Topologically, residues 425–442 (TFVVPAEIFPARFRSTCH) are cytoplasmic. The helical transmembrane segment at 443-463 (GISAASGKLGAMVGAFGFLYL) threads the bilayer. The Extracellular portion of the chain corresponds to 464–484 (AQNPDKDKTDAGYPPGIGVRN). Residues 485 to 505 (SLIVLGVVNFLGILFTFLVPE) form a helical membrane-spanning segment. At 506–534 (SKGKSLEEMSGENEDNENSNNDSRTVPIV) the chain is on the cytoplasmic side. The interval 512 to 534 (EEMSGENEDNENSNNDSRTVPIV) is disordered. A phosphoserine mark is found at S524 and S528.

This sequence belongs to the major facilitator superfamily. Phosphate:H(+) symporter (TC 2.A.1.9) family. In terms of assembly, interacts with NLA. In terms of processing, ubiquitinated by NLA. Ubiquitination of PHT1-4 leads to its degradation by the proteasome. Mostly expressed in roots, in tissues connecting the lateral roots to the primary root. Also present in flowers, in senescing anther filaments and in the abscission zone at the base of siliques. Expressed in hydathodes and axillary buds, and in some senescing leaves. After Pi starvation, localized in all cells of undifferentiated root segments, including root tips and root hairs, and in the epidermis, cortex and stellar regions of mature root segments.

Its subcellular location is the cell membrane. In terms of biological role, high-affinity transporter for external inorganic phosphate. Acts as a H(+):phosphate symporter in both low- and high-Pi conditions. Confers sensitivity to arsenate. The sequence is that of Inorganic phosphate transporter 1-4 (PHT1-4) from Arabidopsis thaliana (Mouse-ear cress).